A 379-amino-acid chain; its full sequence is Presenilin-associated rhomboid-like protein, mitochondrial (379 aa).

The transit peptide at 1-52 (MAWRGWAQRGWGCGQAWAASVGGRSCEELTAALTPPRLLGRRFNFFIQQKCG) directs the protein to the mitochondrion. Over 53 to 101 (FRKAPRKVEPRRSDTGTSGEAYKRSALIPPVEETVFYPSPYPIRSLIKP) the chain is Mitochondrial matrix. Ser-65 bears the Phosphoserine mark. Thr-69 is modified (phosphothreonine). Ser-70 carries the post-translational modification Phosphoserine. A helical transmembrane segment spans residues 102–121 (LFFTVGFTGCAFGSAAIWQY). Topologically, residues 122–167 (ESLKSRVQSYFDGIKADWLDSIRPQKEGDFRKEINKWWNNLSDGQR) are mitochondrial intermembrane. A helical membrane pass occupies residues 168 to 187 (TVTGIIAANVLVFCLWRVPS). The Mitochondrial matrix segment spans residues 188–207 (LQRTMIRYFTSNPASKVLCS). Residues 208 to 230 (PMLLSTFSHFSLFHMAANMYVLW) traverse the membrane as a helical segment. Over 231–244 (SFSSSIVNILGQEQ) the chain is Mitochondrial intermembrane. A helical membrane pass occupies residues 245–262 (FMAVYLSAGVISNFVSYV). At 263 to 273 (GKVATGRYGPS) the chain is on the mitochondrial matrix side. The helical transmembrane segment at 274–292 (LGASGAIMTVLAAVCTKIP) threads the bilayer. The active-site Nucleophile is Ser-277. The Mitochondrial intermembrane portion of the chain corresponds to 293–295 (EGR). The chain crosses the membrane as a helical span at residues 296–318 (LAIIFLPMFTFTAGNALKAIIAM). Residues 319–332 (DTAGMILGWKFFDH) lie on the Mitochondrial matrix side of the membrane. The chain crosses the membrane as a helical span at residues 333 to 354 (AAHLGGALFGIWYVTYGHELIW). His-335 is an active-site residue. The Mitochondrial intermembrane segment spans residues 355–379 (KNREPLVKIWHEIRTNGPKKGGGSK).

Belongs to the peptidase S54 family. Interacts with PSEN1 and PSEN2. Binds OPA1. P-beta is proteolytically processed (beta-cleavage) in a PARL-dependent manner.

Its subcellular location is the mitochondrion inner membrane. The protein resides in the nucleus. It catalyses the reaction Cleaves type-1 transmembrane domains using a catalytic dyad composed of serine and histidine that are contributed by different transmembrane domains.. Functionally, required for the control of apoptosis during postnatal growth. Essential for proteolytic processing of an antiapoptotic form of OPA1 which prevents the release of mitochondrial cytochrome c in response to intrinsic apoptotic signals. Required for the maturation of PINK1 into its 52kDa mature form after its cleavage by mitochondrial-processing peptidase (MPP). Promotes cleavage of serine/threonine-protein phosphatase PGAM5 in damaged mitochondria in response to loss of mitochondrial membrane potential. Mediates differential cleavage of PINK1 and PGAM5 depending on the health status of mitochondria, disassociating from PINK1 and associating with PGAM5 in response to mitochondrial membrane potential loss. Required for processing of CLPB into a form with higher protein disaggregase activity by removing an autoinhibitory N-terminal peptide. Promotes processing of DIABLO/SMAC in the mitochondrion which is required for DIABLO apoptotic activity. Also required for cleavage of STARD7 and TTC19. Promotes changes in mitochondria morphology regulated by phosphorylation of P-beta domain. The sequence is that of Presenilin-associated rhomboid-like protein, mitochondrial (PARL) from Pongo abelii (Sumatran orangutan).